A 211-amino-acid chain; its full sequence is Urease accessory protein UreF (211 aa).

Positions 71-93 are disordered; it reads DDADRETDARTPAPAARHASRSQ.

The protein belongs to the UreF family. UreD, UreF and UreG form a complex that acts as a GTP-hydrolysis-dependent molecular chaperone, activating the urease apoprotein by helping to assemble the nickel containing metallocenter of UreC. The UreE protein probably delivers the nickel.

Its subcellular location is the cytoplasm. In terms of biological role, required for maturation of urease via the functional incorporation of the urease nickel metallocenter. In Mycobacterium tuberculosis (strain ATCC 25177 / H37Ra), this protein is Urease accessory protein UreF.